We begin with the raw amino-acid sequence, 390 residues long: Formate-dependent phosphoribosylglycinamide formyltransferase (390 aa).

Residues 19 to 20 (EL) and Glu-79 contribute to the N(1)-(5-phospho-beta-D-ribosyl)glycinamide site. Residues Arg-111, Lys-152, 157-162 (SSGKGQ), 192-195 (EGFV), and Glu-200 contribute to the ATP site. Residues 116-305 (RLAAEELGLP…EFAIHARAIL (190 aa)) form the ATP-grasp domain. 2 residues coordinate Mg(2+): Glu-264 and Glu-276. Residues Asp-283, Lys-353, and 360-361 (RR) each bind N(1)-(5-phospho-beta-D-ribosyl)glycinamide.

It belongs to the PurK/PurT family. As to quaternary structure, homodimer.

The catalysed reaction is N(1)-(5-phospho-beta-D-ribosyl)glycinamide + formate + ATP = N(2)-formyl-N(1)-(5-phospho-beta-D-ribosyl)glycinamide + ADP + phosphate + H(+). It participates in purine metabolism; IMP biosynthesis via de novo pathway; N(2)-formyl-N(1)-(5-phospho-D-ribosyl)glycinamide from N(1)-(5-phospho-D-ribosyl)glycinamide (formate route): step 1/1. Functionally, involved in the de novo purine biosynthesis. Catalyzes the transfer of formate to 5-phospho-ribosyl-glycinamide (GAR), producing 5-phospho-ribosyl-N-formylglycinamide (FGAR). Formate is provided by PurU via hydrolysis of 10-formyl-tetrahydrofolate. This is Formate-dependent phosphoribosylglycinamide formyltransferase from Marinobacter nauticus (strain ATCC 700491 / DSM 11845 / VT8) (Marinobacter aquaeolei).